Consider the following 446-residue polypeptide: Transcription factor Sox-10 (446 aa).

Disordered stretches follow at residues 1–60 (MSDD…SEDE), 153–191 (RLRM…AEGG), and 203–264 (HLDH…IDFG). A compositionally biased stretch (acidic residues) spans 36 to 48 (DDDDDDDEEEEEE). K52 is covalently cross-linked (Glycyl lysine isopeptide (Lys-Gly) (interchain with G-Cter in SUMO)). A dimerization (DIM) region spans residues 56–96 (DSEDERFPVCIREAVSQVLNGYDWTLVPMPVRVNGGSKSKP). Positions 98–166 (VKRPMNAFMV…QHKKDHPDYK (69 aa)) form a DNA-binding region, HMG box. Positions 153-167 (RLRMQHKKDHPDYKY) are enriched in basic and acidic residues. The segment covering 213 to 226 (SDGNSEHSTGQSHG) has biased composition (polar residues). Positions 217 to 303 (SEHSTGQSHG…NGHAGHPSHI (87 aa)) are transactivation domain (TAM). Basic and acidic residues predominate over residues 243 to 257 (SDGKRDGSHALREGG). The segment at 337-446 (KAQVKTESSS…QPVYTTLSRP (110 aa)) is transactivation domain (TAC). K341 participates in a covalent cross-link: Glycyl lysine isopeptide (Lys-Gly) (interchain with G-Cter in SUMO). The disordered stretch occupies residues 421-446 (SDPPSVAQSHSPTHWEQPVYTTLSRP). The span at 426–446 (VAQSHSPTHWEQPVYTTLSRP) shows a compositional bias: polar residues.

In terms of assembly, interacts with the sumoylation factors ube2i/ubc9 and sumo1. Post-translationally, sumoylated. In terms of tissue distribution, first expressed at stages 13/14 at the lateral edges of the neural plate, in the neural crest forming region. By stage 22, neural crest cells migrate in the cranial region and strong expression is seen in the crest cells that populate the branchial arches as well as those migrating in the frontonasal region. Also strongly expressed in the trunk neural crest. Expression in the otic vesicle begins around stage 25 and persists until at least stage 40. At stage 30, expression is down-regulated in the cranial neural crest of the pharyngeal arches but persists in the trunk neural crest, in the otic vesicle and in discrete domains adjacent to the hindbrain. At stage 40, expression is restricted to the otic vesicle, differentiated pigment cells, and in several cranial ganglia.

The protein localises to the cytoplasm. The protein resides in the nucleus. Its function is as follows. Acts early in neural crest formation, functioning redundantly with the other group E Sox factors sox8 and sox9 to induce neural crest progenitors. Acts downstream of wnt-signaling at the neural plate border. Involved in the specification of neural crest progenitors fated to form the pigment cell lineage. In Xenopus laevis (African clawed frog), this protein is Transcription factor Sox-10 (sox10).